The chain runs to 506 residues: Histidine ammonia-lyase (506 aa).

A cross-link (5-imidazolinone (Ala-Gly)) is located at residues 143–145; the sequence is ASG. Ser-144 bears the 2,3-didehydroalanine (Ser) mark.

This sequence belongs to the PAL/histidase family. Contains an active site 4-methylidene-imidazol-5-one (MIO), which is formed autocatalytically by cyclization and dehydration of residues Ala-Ser-Gly.

The protein resides in the cytoplasm. The catalysed reaction is L-histidine = trans-urocanate + NH4(+). Its pathway is amino-acid degradation; L-histidine degradation into L-glutamate; N-formimidoyl-L-glutamate from L-histidine: step 1/3. This is Histidine ammonia-lyase from Citrobacter koseri (strain ATCC BAA-895 / CDC 4225-83 / SGSC4696).